We begin with the raw amino-acid sequence, 124 residues long: MATINQLVNNPRKRSVVKSKVPALKACPQRRGVCTRVYTTTPKKPNSALRKVARVRLTSGFEVTSYIGGEGHNLQEHSVVLIRGGRVKDLPGVRYHIVRGALDTSGVNNRKHGRSKYGTKRPKS.

A 3-methylthioaspartic acid modification is found at Asp-89. The segment at 102–124 (LDTSGVNNRKHGRSKYGTKRPKS) is disordered. Over residues 109 to 124 (NRKHGRSKYGTKRPKS) the composition is skewed to basic residues.

The protein belongs to the universal ribosomal protein uS12 family. Part of the 30S ribosomal subunit. Contacts proteins S8 and S17. May interact with IF1 in the 30S initiation complex.

In terms of biological role, with S4 and S5 plays an important role in translational accuracy. Its function is as follows. Interacts with and stabilizes bases of the 16S rRNA that are involved in tRNA selection in the A site and with the mRNA backbone. Located at the interface of the 30S and 50S subunits, it traverses the body of the 30S subunit contacting proteins on the other side and probably holding the rRNA structure together. The combined cluster of proteins S8, S12 and S17 appears to hold together the shoulder and platform of the 30S subunit. The chain is Small ribosomal subunit protein uS12 from Francisella tularensis subsp. novicida (strain U112).